The primary structure comprises 262 residues: tRNA U34 carboxymethyltransferase (262 aa).

Carboxy-S-adenosyl-L-methionine is bound by residues lysine 25, tryptophan 39, lysine 44, glycine 63, valine 114–glutamate 115, tyrosine 135, and arginine 250.

The protein belongs to the class I-like SAM-binding methyltransferase superfamily. CmoB family. In terms of assembly, homotetramer.

It carries out the reaction carboxy-S-adenosyl-L-methionine + 5-hydroxyuridine(34) in tRNA = 5-carboxymethoxyuridine(34) in tRNA + S-adenosyl-L-homocysteine + H(+). Its function is as follows. Catalyzes carboxymethyl transfer from carboxy-S-adenosyl-L-methionine (Cx-SAM) to 5-hydroxyuridine (ho5U) to form 5-carboxymethoxyuridine (cmo5U) at position 34 in tRNAs. This chain is tRNA U34 carboxymethyltransferase, found in Helicobacter acinonychis (strain Sheeba).